The sequence spans 475 residues: FAD-dependent monooxygenase janM (475 aa).

The helical transmembrane segment at 8-24 (VIIVGGSIGGLTLAHCL) threads the bilayer. FAD is bound by residues glutamate 35, glycine 49, and arginine 108. A glycan (N-linked (GlcNAc...) asparagine) is linked at asparagine 147. Positions 299 and 312 each coordinate FAD. A helical transmembrane segment spans residues 432–451 (GWRFHAMLCILMLAILYTWV).

This sequence belongs to the paxM FAD-dependent monooxygenase family. FAD serves as cofactor.

Its subcellular location is the membrane. It functions in the pathway secondary metabolite biosynthesis. In terms of biological role, FAD-dependent monooxygenase; part of the gene cluster that mediates the biosynthesis of the indole diterpenes janthitremanes such as shearinine K or shearinine A. The geranylgeranyl diphosphate (GGPP) synthase janG catalyzes the first step in janthitremane biosynthesis via conversion of farnesyl pyrophosphate and isopentyl pyrophosphate into geranylgeranyl pyrophosphate (GGPP). Condensation of indole-3-glycerol phosphate with GGPP by the prenyl transferase janC then forms 3-geranylgeranylindole (3-GGI). Epoxidation by the FAD-dependent monooxygenase janM leads to a epoxidized-GGI that is substrate of the terpene cyclase janB for cyclization to yield paspaline. Paspaline is subsequently converted to 13-desoxypaspaline by the cytochrome P450 monooxygenase janP, via beta-PC-M6 in a series of alpha-face oxidations. The cytochrome P450 monooxygenase janQ is proposed to carry out sequential beta-face oxidation steps at C-7 and C-13 of 13-desoxypaspaline to form paspalicine and paspalinine respectively. The indole diterpene prenyltransferase janD may then convert paspalinine into shearinine K which is substrate of janO and/or additional enzymes for oxidation and cyclization to generate shearinine A. The polypeptide is FAD-dependent monooxygenase janM (Penicillium janthinellum (Penicillium vitale)).